A 445-amino-acid polypeptide reads, in one-letter code: Adenylyltransferase and sulfurtransferase MOCS3 (445 aa).

A disordered region spans residues 49-70 (LPPSAAAEVEPTGSPSSSSSAA). ATP is bound by residues Gly106, Asp127, 134 to 138 (DNLHR), Lys151, and 170 to 171 (NN). Positions 211 and 214 each coordinate Zn(2+). The active-site Glycyl thioester intermediate; for adenylyltransferase activity is Cys228. Zn(2+) is bound by residues Cys286 and Cys289. The 102-residue stretch at 342–443 (SGRPHLLVDV…WAKEVDPSFL (102 aa)) folds into the Rhodanese domain. Residue Cys403 is the Cysteine persulfide intermediate; for sulfurtransferase activity of the active site.

It in the N-terminal section; belongs to the HesA/MoeB/ThiF family. UBA4 subfamily. It depends on Zn(2+) as a cofactor.

The protein localises to the cytoplasm. Its subcellular location is the cytosol. It carries out the reaction [molybdopterin-synthase sulfur-carrier protein]-C-terminal Gly-Gly + ATP + H(+) = [molybdopterin-synthase sulfur-carrier protein]-C-terminal Gly-Gly-AMP + diphosphate. It catalyses the reaction [molybdopterin-synthase sulfur-carrier protein]-C-terminal Gly-Gly-AMP + S-sulfanyl-L-cysteinyl-[cysteine desulfurase] + AH2 = [molybdopterin-synthase sulfur-carrier protein]-C-terminal-Gly-aminoethanethioate + L-cysteinyl-[cysteine desulfurase] + A + AMP + 2 H(+). The protein operates within tRNA modification; 5-methoxycarbonylmethyl-2-thiouridine-tRNA biosynthesis. Its pathway is cofactor biosynthesis; molybdopterin biosynthesis. In terms of biological role, plays a central role in 2-thiolation of mcm(5)S(2)U at tRNA wobble positions of cytosolic tRNA(Lys), tRNA(Glu) and tRNA(Gln). Also essential during biosynthesis of the molybdenum cofactor. Acts by mediating the C-terminal thiocarboxylation of sulfur carriers URM1 and MOCS2A. Its N-terminus first activates URM1 and MOCS2A as acyl-adenylates (-COAMP), then the persulfide sulfur on the catalytic cysteine is transferred to URM1 and MOCS2A to form thiocarboxylation (-COSH) of their C-terminus. The reaction probably involves hydrogen sulfide that is generated from the persulfide intermediate and that acts as a nucleophile towards URM1 and MOCS2A. Subsequently, a transient disulfide bond is formed. Does not use thiosulfate as sulfur donor; NFS1 probably acting as a sulfur donor for thiocarboxylation reactions. The polypeptide is Adenylyltransferase and sulfurtransferase MOCS3 (Oryza sativa subsp. japonica (Rice)).